Here is a 347-residue protein sequence, read N- to C-terminus: Fructose-1,6-bisphosphatase class 1 (347 aa).

Positions 107, 128, 130, and 131 each coordinate Mg(2+). Substrate contacts are provided by residues D131–S134, N224, Y257, and K286. E292 provides a ligand contact to Mg(2+).

The protein belongs to the FBPase class 1 family. In terms of assembly, homotetramer. Requires Mg(2+) as cofactor.

It localises to the cytoplasm. The catalysed reaction is beta-D-fructose 1,6-bisphosphate + H2O = beta-D-fructose 6-phosphate + phosphate. The protein operates within carbohydrate biosynthesis; gluconeogenesis. This Sorangium cellulosum (strain So ce56) (Polyangium cellulosum (strain So ce56)) protein is Fructose-1,6-bisphosphatase class 1.